Consider the following 248-residue polypeptide: Probable transcriptional regulatory protein PsycPRwf_1013 (248 aa).

This sequence belongs to the TACO1 family.

It localises to the cytoplasm. This chain is Probable transcriptional regulatory protein PsycPRwf_1013, found in Psychrobacter sp. (strain PRwf-1).